We begin with the raw amino-acid sequence, 291 residues long: 33 kDa chaperonin (291 aa).

2 cysteine pairs are disulfide-bonded: C235–C237 and C268–C271.

It belongs to the HSP33 family. In terms of processing, under oxidizing conditions two disulfide bonds are formed involving the reactive cysteines. Under reducing conditions zinc is bound to the reactive cysteines and the protein is inactive.

The protein localises to the cytoplasm. Functionally, redox regulated molecular chaperone. Protects both thermally unfolding and oxidatively damaged proteins from irreversible aggregation. Plays an important role in the bacterial defense system toward oxidative stress. In Bacillus pumilus (strain SAFR-032), this protein is 33 kDa chaperonin.